A 163-amino-acid chain; its full sequence is ATP synthase subunit b (163 aa).

The chain crosses the membrane as a helical span at residues 1-21 (MISFNLTSIVNLVGFLAFMFL).

It belongs to the ATPase B chain family. In terms of assembly, F-type ATPases have 2 components, F(1) - the catalytic core - and F(0) - the membrane proton channel. F(1) has five subunits: alpha(3), beta(3), gamma(1), delta(1), epsilon(1). F(0) has three main subunits: a(1), b(2) and c(10-14). The alpha and beta chains form an alternating ring which encloses part of the gamma chain. F(1) is attached to F(0) by a central stalk formed by the gamma and epsilon chains, while a peripheral stalk is formed by the delta and b chains.

The protein localises to the cell inner membrane. Its function is as follows. F(1)F(0) ATP synthase produces ATP from ADP in the presence of a proton or sodium gradient. F-type ATPases consist of two structural domains, F(1) containing the extramembraneous catalytic core and F(0) containing the membrane proton channel, linked together by a central stalk and a peripheral stalk. During catalysis, ATP synthesis in the catalytic domain of F(1) is coupled via a rotary mechanism of the central stalk subunits to proton translocation. Functionally, component of the F(0) channel, it forms part of the peripheral stalk, linking F(1) to F(0). The chain is ATP synthase subunit b from Petrotoga mobilis (strain DSM 10674 / SJ95).